Reading from the N-terminus, the 229-residue chain is ATP synthase subunit a (229 aa).

The next 7 membrane-spanning stretches (helical) occupy residues 25 to 45, 58 to 75, 81 to 101, 110 to 130, 141 to 161, 175 to 195, and 196 to 216; these read VHII…VLGA, FLEV…SVTG, FFPL…IGLV, SINT…FIGI, FLGP…IGHL, MMGH…FFAP, and LPIM…FFLL.

Belongs to the ATPase A chain family. In terms of assembly, F-type ATPases have 2 components, CF(1) - the catalytic core - and CF(0) - the membrane proton channel. CF(1) has five subunits: alpha(3), beta(3), gamma(1), delta(1), epsilon(1). CF(0) has three main subunits: a(1), b(2) and c(9-12). The alpha and beta chains form an alternating ring which encloses part of the gamma chain. CF(1) is attached to CF(0) by a central stalk formed by the gamma and epsilon chains, while a peripheral stalk is formed by the delta and b chains.

The protein resides in the cell inner membrane. Its function is as follows. Key component of the proton channel; it plays a direct role in the translocation of protons across the membrane. The sequence is that of ATP synthase subunit a from Desulfosudis oleivorans (strain DSM 6200 / JCM 39069 / Hxd3) (Desulfococcus oleovorans).